A 135-amino-acid polypeptide reads, in one-letter code: Hemoglobin subunit beta-3 (135 aa).

The 134-residue stretch at 2–135 (HWTAEEKALV…VVDALSKAYQ (134 aa)) folds into the Globin domain. Residues His-57 and His-81 each coordinate heme b.

It belongs to the globin family. Hb 3 is a heterotetramer of two alpha and two beta-3 chains. In terms of tissue distribution, red blood cells (at protein level).

Functionally, involved in oxygen transport from gills to the various peripheral tissues. In Somniosus microcephalus (Greenland sleeper shark), this protein is Hemoglobin subunit beta-3.